Here is a 446-residue protein sequence, read N- to C-terminus: Adenylosuccinate synthetase (446 aa).

GTP is bound by residues 21–27 (GDEGKGK) and 49–51 (GHT). The Proton acceptor role is filled by aspartate 22. Mg(2+)-binding residues include aspartate 22 and glycine 49. IMP contacts are provided by residues 22-25 (DEGK), 47-50 (NAGH), threonine 141, arginine 155, glutamine 236, threonine 251, and arginine 319. Catalysis depends on histidine 50, which acts as the Proton donor. 315-321 (VTTGRSR) provides a ligand contact to substrate. Residues arginine 321, 347-349 (KLD), and 429-431 (STS) each bind GTP.

This sequence belongs to the adenylosuccinate synthetase family. As to quaternary structure, homodimer. It depends on Mg(2+) as a cofactor.

The protein resides in the cytoplasm. It carries out the reaction IMP + L-aspartate + GTP = N(6)-(1,2-dicarboxyethyl)-AMP + GDP + phosphate + 2 H(+). It participates in purine metabolism; AMP biosynthesis via de novo pathway; AMP from IMP: step 1/2. Functionally, plays an important role in the de novo pathway of purine nucleotide biosynthesis. Catalyzes the first committed step in the biosynthesis of AMP from IMP. The sequence is that of Adenylosuccinate synthetase from Polaromonas sp. (strain JS666 / ATCC BAA-500).